A 363-amino-acid chain; its full sequence is UDP-N-acetylglucosamine--N-acetylmuramyl-(pentapeptide) pyrophosphoryl-undecaprenol N-acetylglucosamine transferase (363 aa).

UDP-N-acetyl-alpha-D-glucosamine contacts are provided by residues Thr-10–Gly-12, Asn-124, Ser-195, Ile-250, and Gln-295.

The protein belongs to the glycosyltransferase 28 family. MurG subfamily.

It is found in the cell membrane. The catalysed reaction is Mur2Ac(oyl-L-Ala-gamma-D-Glu-L-Lys-D-Ala-D-Ala)-di-trans,octa-cis-undecaprenyl diphosphate + UDP-N-acetyl-alpha-D-glucosamine = beta-D-GlcNAc-(1-&gt;4)-Mur2Ac(oyl-L-Ala-gamma-D-Glu-L-Lys-D-Ala-D-Ala)-di-trans,octa-cis-undecaprenyl diphosphate + UDP + H(+). It functions in the pathway cell wall biogenesis; peptidoglycan biosynthesis. Cell wall formation. Catalyzes the transfer of a GlcNAc subunit on undecaprenyl-pyrophosphoryl-MurNAc-pentapeptide (lipid intermediate I) to form undecaprenyl-pyrophosphoryl-MurNAc-(pentapeptide)GlcNAc (lipid intermediate II). In Lactiplantibacillus plantarum (strain ATCC BAA-793 / NCIMB 8826 / WCFS1) (Lactobacillus plantarum), this protein is UDP-N-acetylglucosamine--N-acetylmuramyl-(pentapeptide) pyrophosphoryl-undecaprenol N-acetylglucosamine transferase.